We begin with the raw amino-acid sequence, 264 residues long: Thiazole synthase (264 aa).

The active-site Schiff-base intermediate with DXP is K106. Residues G167, A193–G194, and N215–T216 each bind 1-deoxy-D-xylulose 5-phosphate.

It belongs to the ThiG family. Homotetramer. Forms heterodimers with either ThiH or ThiS.

It localises to the cytoplasm. The enzyme catalyses [ThiS sulfur-carrier protein]-C-terminal-Gly-aminoethanethioate + 2-iminoacetate + 1-deoxy-D-xylulose 5-phosphate = [ThiS sulfur-carrier protein]-C-terminal Gly-Gly + 2-[(2R,5Z)-2-carboxy-4-methylthiazol-5(2H)-ylidene]ethyl phosphate + 2 H2O + H(+). Its pathway is cofactor biosynthesis; thiamine diphosphate biosynthesis. Catalyzes the rearrangement of 1-deoxy-D-xylulose 5-phosphate (DXP) to produce the thiazole phosphate moiety of thiamine. Sulfur is provided by the thiocarboxylate moiety of the carrier protein ThiS. In vitro, sulfur can be provided by H(2)S. This Xanthomonas campestris pv. campestris (strain 8004) protein is Thiazole synthase.